The sequence spans 469 residues: Glutamate--tRNA ligase (469 aa).

The 'HIGH' region motif lies at 12-22 (PSPTGFIHLGN). The 'KMSKS' region motif lies at 244–248 (KMSKR). Lys-247 provides a ligand contact to ATP.

This sequence belongs to the class-I aminoacyl-tRNA synthetase family. Glutamate--tRNA ligase type 1 subfamily. In terms of assembly, monomer.

The protein localises to the cytoplasm. It carries out the reaction tRNA(Glu) + L-glutamate + ATP = L-glutamyl-tRNA(Glu) + AMP + diphosphate. Its function is as follows. Catalyzes the attachment of glutamate to tRNA(Glu) in a two-step reaction: glutamate is first activated by ATP to form Glu-AMP and then transferred to the acceptor end of tRNA(Glu). The chain is Glutamate--tRNA ligase from Acidovorax sp. (strain JS42).